A 551-amino-acid polypeptide reads, in one-letter code: Putative ABC transporter ATP-binding protein BT9727_3105 (551 aa).

ABC transporter domains are found at residues 5-243 (AEIN…FRPF) and 293-525 (LSAE…SINR). ATP is bound by residues 39–46 (GGSGSGKT) and 327–334 (GKNGTGKS).

This sequence belongs to the ABC transporter superfamily.

Its subcellular location is the cell membrane. Functionally, probably part of an ABC transporter complex. Responsible for energy coupling to the transport system. The polypeptide is Putative ABC transporter ATP-binding protein BT9727_3105 (Bacillus thuringiensis subsp. konkukian (strain 97-27)).